We begin with the raw amino-acid sequence, 477 residues long: Ribulose bisphosphate carboxylase large chain (477 aa).

The propeptide occupies 1–2 (MS). Position 3 is an N-acetylproline (proline 3). Lysine 14 carries the N6,N6,N6-trimethyllysine modification. 2 residues coordinate substrate: asparagine 123 and threonine 173. Lysine 175 serves as the catalytic Proton acceptor. Lysine 177 is a substrate binding site. Mg(2+)-binding residues include lysine 201, aspartate 203, and glutamate 204. Lysine 201 is subject to N6-carboxylysine. Histidine 294 acts as the Proton acceptor in catalysis. Arginine 295, histidine 327, and serine 379 together coordinate substrate.

Belongs to the RuBisCO large chain family. Type I subfamily. As to quaternary structure, heterohexadecamer of 8 large chains and 8 small chains; disulfide-linked. The disulfide link is formed within the large subunit homodimers. The cofactor is Mg(2+). The disulfide bond which can form in the large chain dimeric partners within the hexadecamer appears to be associated with oxidative stress and protein turnover.

The protein resides in the plastid. It localises to the chloroplast. It catalyses the reaction 2 (2R)-3-phosphoglycerate + 2 H(+) = D-ribulose 1,5-bisphosphate + CO2 + H2O. It carries out the reaction D-ribulose 1,5-bisphosphate + O2 = 2-phosphoglycolate + (2R)-3-phosphoglycerate + 2 H(+). Its function is as follows. RuBisCO catalyzes two reactions: the carboxylation of D-ribulose 1,5-bisphosphate, the primary event in carbon dioxide fixation, as well as the oxidative fragmentation of the pentose substrate in the photorespiration process. Both reactions occur simultaneously and in competition at the same active site. The sequence is that of Ribulose bisphosphate carboxylase large chain from Hyophorbe lagenicaulis (Bottle palm).